We begin with the raw amino-acid sequence, 103 residues long: MRKLRCKQMIPKLLPFIFIYLSVANKIMFYCILNERAFKHYKTYRRITDCPEIKNKKSRRKNQRNSSSIGLSNPNKFSIYIYIYFFFYSFLCSPYLFKYISLF.

2 helical membrane-spanning segments follow: residues 13 to 33 (LLPF…YCIL) and 77 to 97 (FSIY…PYLF).

It localises to the endoplasmic reticulum membrane. This is an uncharacterized protein from Schizosaccharomyces pombe (strain 972 / ATCC 24843) (Fission yeast).